We begin with the raw amino-acid sequence, 764 residues long: Complement factor B (764 aa).

The N-terminal stretch at 1-25 (MGSNLSPQLCLMPFILGLLSGGVTT) is a signal peptide. 3 Sushi domains span residues 35–100 (GSCS…ECRA), 101–160 (IHCP…ICDN), and 163–220 (GYCS…SCQD). Disulfide bonds link cysteine 37–cysteine 76, cysteine 62–cysteine 98, cysteine 103–cysteine 145, cysteine 131–cysteine 158, cysteine 165–cysteine 205, and cysteine 191–cysteine 218. N-linked (GlcNAc...) asparagine glycans are attached at residues asparagine 122 and asparagine 142. Residues 270–469 (NIYLVLDGSD…NLEDVFYQMI (200 aa)) form the VWFA domain. Residues serine 278 and serine 280 each coordinate Mg(2+). Mn(2+) is bound by residues serine 278 and serine 280. A glycan (N-linked (GlcNAc...) asparagine) is linked at asparagine 285. Residue lysine 291 is glycosylated (N-linked (Glc) (glycation) lysine). Threonine 353 serves as a coordination point for Mg(2+). Threonine 353 contributes to the Mn(2+) binding site. Asparagine 378 is a glycosylation site (N-linked (GlcNAc...) asparagine). Residues 477-757 (LCGMVWEHRK…VLPWLKEKLQ (281 aa)) enclose the Peptidase S1 domain. 5 disulfide bridges follow: cysteine 478–cysteine 596, cysteine 511–cysteine 527, cysteine 599–cysteine 615, cysteine 656–cysteine 682, and cysteine 695–cysteine 725. Residues histidine 526 and aspartate 576 each act as charge relay system in the active site. Serine 699 acts as the Charge relay system in catalysis.

This sequence belongs to the peptidase S1 family. Monomer. Interacts with complement C3b; this interaction is dependent on the presence of Mg(2+). As to quaternary structure, catalytic component of the C3 convertase of the alternative complement pathway, also named C3bBb, composed of complement factor B Bb and complement C3b. Catalytic component of the C5 convertase of the alternative complement pathway, also named C3bBb3b, composed of complement factor B Bb and additional molecules of complement C3b. Interacts to CFP; this interaction contributes to the stabilization of the active C3-convertase enzyme complex. Requires Mg(2+) as cofactor. The cofactor is Mn(2+). Cleaved by CFD following activation of the alternative complement system, generating Ba and Bb chains. Cleavage and activation takes place when CFB is already associated with complement C3b.

It is found in the secreted. It localises to the cell surface. It carries out the reaction Cleavage of Arg-|-Ser bond in complement component C3 alpha-chain to yield C3a and C3b, and Arg-|-Xaa bond in complement component C5 alpha-chain to yield C5a and C5b.. Its function is as follows. Precursor of the catalytic component of the C3 and C5 convertase complexes of the alternative pathway of the complement system, a cascade of proteins that leads to phagocytosis and breakdown of pathogens and signaling that strengthens the adaptive immune system. The alternative complement pathway acts as an amplification loop that enhances other complement pathways (classical, lectin and GZMK) by promoting formation of additional C3 and C5 convertases. CFB is cleaved and activated by CFD to generate Ba and Bb chains; Bb chain constituting the catalytic component of the C3 and C5 convertases. In terms of biological role, serine protease component of the complement C3 and C5 convertase complexes of the alternative complement pathway. Following cleavage and activation by factor D (CFD), forms the C3 convertase together with complement C3b. As part of the C3 convertase, cleaves and activates C3 into C3a anaphylatoxin and C3b opsonin, the next components of the complement pathways. When an additional complement C3b molecule binds to the C3 convertase, forms the C5 convertase, which cleaves and activates C5 into C5a anaphylatoxin and C5b component of the membrane attack complex. Involved in proliferation and differentiation of preactivated B-lymphocytes, rapid spreading of peripheral blood monocytes, stimulation of lymphocyte blastogenesis and lysis of erythrocytes. In Homo sapiens (Human), this protein is Complement factor B.